A 132-amino-acid chain; its full sequence is Small ribosomal subunit protein uS8 (132 aa).

It belongs to the universal ribosomal protein uS8 family. As to quaternary structure, part of the 30S ribosomal subunit. Contacts proteins S5 and S12.

Its function is as follows. One of the primary rRNA binding proteins, it binds directly to 16S rRNA central domain where it helps coordinate assembly of the platform of the 30S subunit. This is Small ribosomal subunit protein uS8 from Staphylococcus aureus (strain USA300).